The chain runs to 282 residues: Undecaprenyl-diphosphatase (282 aa).

Helical transmembrane passes span 1 to 21, 40 to 60, 85 to 105, 117 to 137, 196 to 216, 229 to 249, and 258 to 278; these read MTLFESIVLGVVQGLTEFLPV, GAAFTAVVQLGTLAAVLIYFY, AAMGWMIAVGTLPIVICGLLF, YWVSGALIGFALLLLVAEWSV, FSFLLSLPSVFAAALFELYHT, AITAATITAGITGYLSIAFLI, and SIFIIYRIILGAGILSLIAAG.

This sequence belongs to the UppP family.

The protein localises to the cell inner membrane. It carries out the reaction di-trans,octa-cis-undecaprenyl diphosphate + H2O = di-trans,octa-cis-undecaprenyl phosphate + phosphate + H(+). In terms of biological role, catalyzes the dephosphorylation of undecaprenyl diphosphate (UPP). Confers resistance to bacitracin. The protein is Undecaprenyl-diphosphatase of Chlorobium phaeobacteroides (strain DSM 266 / SMG 266 / 2430).